Reading from the N-terminus, the 554-residue chain is Valerianol synthase TPS1B (554 aa).

The Mg(2+) site is built by D307 and D311. A DDXXD motif motif is present at residues 326 to 330 (VQRWD). Mg(2+)-binding residues include D452, S456, and E460.

The protein belongs to the terpene synthase family. The cofactor is Mg(2+).

The enzyme catalyses (2E,6E)-farnesyl diphosphate + H2O = valerianol + diphosphate. The protein operates within secondary metabolite biosynthesis; terpenoid biosynthesis. Functionally, terpene synthase that catalyzes the biosynthesis of the terpene valerianol, which is a volatile compound of floral scent. The chain is Valerianol synthase TPS1B from Camellia hiemalis (Camellia).